A 549-amino-acid polypeptide reads, in one-letter code: Glucose-6-phosphate isomerase (549 aa).

The Proton donor role is filled by Glu-353. Catalysis depends on residues His-384 and Lys-513.

It belongs to the GPI family.

The protein resides in the cytoplasm. It carries out the reaction alpha-D-glucose 6-phosphate = beta-D-fructose 6-phosphate. It participates in carbohydrate biosynthesis; gluconeogenesis. It functions in the pathway carbohydrate degradation; glycolysis; D-glyceraldehyde 3-phosphate and glycerone phosphate from D-glucose: step 2/4. Functionally, catalyzes the reversible isomerization of glucose-6-phosphate to fructose-6-phosphate. The chain is Glucose-6-phosphate isomerase from Brucella abortus (strain S19).